The primary structure comprises 554 residues: Protein PNS1 (554 aa).

2 stretches are compositionally biased toward low complexity: residues 1–19 (MSGP…NNNN) and 27–45 (SYQM…QPQY). The disordered stretch occupies residues 1-90 (MSGPQYGAQP…TDGYGGPPPS (90 aa)). At 1-105 (MSGPQYGAQP…KVQKPKYNDW (105 aa)) the chain is on the cytoplasmic side. Residues 68-90 (PQGPPPNGSKPPPTDGYGGPPPS) are compositionally biased toward pro residues. A helical transmembrane segment spans residues 106-126 (WAGLLFLATVAGFVAVSAISI). The Extracellular portion of the chain corresponds to 127-153 (HGYADNRSQNNGSLNGQRNTFGLTTHT). N132 and N137 each carry an N-linked (GlcNAc...) asparagine glycan. A helical transmembrane segment spans residues 154 to 174 (IYLFVWVLICAIVLSYAYMWM). Residues 175 to 181 (ARKFTKQ) are Cytoplasmic-facing. The chain crosses the membrane as a helical span at residues 182 to 202 (FIYATGILNIVMGLVTALYML). At 203 to 206 (SRKY) the chain is on the extracellular side. Residues 207–227 (WSGGIVFLIFVVLQALFFWSC) traverse the membrane as a helical segment. Over 228–255 (RSRIPFSTLMLQTAIDVSKVHGHVYLVS) the chain is Cytoplasmic. Residues 256-276 (AVGGVIGTLFAAYWAITLVAV) form a helical membrane-spanning segment. At 277-297 (YVKFEPDPNNAACRNAGGCSS) the chain is on the extracellular side. A helical transmembrane segment spans residues 298-318 (GKVIGLIVFITFAGYWISEWL). Residues 319–352 (KNTIHTTVAGIYGSWYFNSRNYPTKVTRGALKRS) are Cytoplasmic-facing. The helical transmembrane segment at 353 to 373 (LTYSFGSISLGSLFIAIINLI) threads the bilayer. Topologically, residues 374 to 389 (RQLAQAAQQNAAQEGD) are extracellular. Residues 390 to 410 (ILGTILWCIFGCLIGILDWLV) traverse the membrane as a helical segment. The Cytoplasmic segment spans residues 411–451 (EFINRYAFCHIALYGKAYFAAAKDTWKMVKDRGIDALINEC). Residues 452–472 (LIGPVLTFGATFVAYACGLIA) traverse the membrane as a helical segment. Residues 473–487 (YLYMVYTKPAYNDGG) lie on the Extracellular side of the membrane. A helical transmembrane segment spans residues 488–508 (GFTPVVVAFAFLIGLQVCNVF). At 509–554 (TTPLTSGIDTIFVAMAWDPEVLMRDHPDLYHRMVQVYPHVQEAIHA) the chain is on the cytoplasmic side.

The protein belongs to the CTL (choline transporter-like) family.

The protein resides in the cell membrane. In terms of biological role, probably involved in transport through the plasma membrane. The chain is Protein PNS1 (pns-1) from Neurospora crassa (strain ATCC 24698 / 74-OR23-1A / CBS 708.71 / DSM 1257 / FGSC 987).